Reading from the N-terminus, the 188-residue chain is Fructose-1-phosphate phosphatase YqaB (188 aa).

The active-site Nucleophile is the aspartate 11. 3 residues coordinate Mg(2+): aspartate 11, aspartate 13, and aspartate 167. 11–13 lines the substrate pocket; that stretch reads DMD.

Belongs to the HAD-like hydrolase superfamily. CbbY/CbbZ/Gph/YieH family. It depends on Mg(2+) as a cofactor. Mn(2+) serves as cofactor. Requires Co(2+) as cofactor. Zn(2+) is required as a cofactor.

Functionally, catalyzes strongly the dephosphorylation of fructose-1-phosphate (Fru1P) and slightly the dephosphorylation of 6-phosphogluconate (6P-Glu). It has low beta-phosphoglucomutase activity. This is Fructose-1-phosphate phosphatase YqaB (yqaB) from Escherichia coli (strain K12).